We begin with the raw amino-acid sequence, 582 residues long: ATP-dependent lipid A-core flippase (582 aa).

The next 5 helical transmembrane spans lie at 15–35, 68–88, 140–160, 161–181, and 254–274; these read LWPIISPFKLGLVVSGIALVI, YVVVLVIFLRGISNFISSYCL, GALITIVREGAYIISLLAVML, YTSWQLSIVLFLIGPIIAVLI, and VQIIASFALAAVLYLATVPTI. An ABC transmembrane type-1 domain is found at 27-310; that stretch reads VVSGIALVIN…LTNVNAQFQK (284 aa). Residues 342–578 enclose the ABC transporter domain; it reads LSFKNVTFTY…NGAYKQLHHI (237 aa). 376–383 contacts ATP; the sequence is GRSGSGKS.

This sequence belongs to the ABC transporter superfamily. Lipid exporter (TC 3.A.1.106) family. Homodimer.

The protein resides in the cell inner membrane. It carries out the reaction ATP + H2O + lipid A-core oligosaccharideSide 1 = ADP + phosphate + lipid A-core oligosaccharideSide 2.. Its function is as follows. Involved in lipopolysaccharide (LPS) biosynthesis. Translocates lipid A-core from the inner to the outer leaflet of the inner membrane. Transmembrane domains (TMD) form a pore in the inner membrane and the ATP-binding domain (NBD) is responsible for energy generation. The polypeptide is ATP-dependent lipid A-core flippase (Pasteurella multocida (strain Pm70)).